Reading from the N-terminus, the 306-residue chain is Curved DNA-binding protein (306 aa).

The 65-residue stretch at 5-69 (DYYAIMGVKP…QRRAEYDQMW (65 aa)) folds into the J domain.

It localises to the cytoplasm. The protein resides in the nucleoid. Its function is as follows. DNA-binding protein that preferentially recognizes a curved DNA sequence. It is probably a functional analog of DnaJ; displays overlapping activities with DnaJ, but functions under different conditions, probably acting as a molecular chaperone in an adaptive response to environmental stresses other than heat shock. Lacks autonomous chaperone activity; binds native substrates and targets them for recognition by DnaK. Its activity is inhibited by the binding of CbpM. The sequence is that of Curved DNA-binding protein from Escherichia coli O157:H7.